Consider the following 142-residue polypeptide: Salivary protein 15b (142 aa).

The N-terminal stretch at 1-20 (MKYLGLALISAVFLIGTCQA) is a signal peptide. 3 disulfides stabilise this stretch: C27–C44, C40–C108, and C91–C117.

It belongs to the PBP/GOBP family. As to expression, female salivary gland.

It localises to the secreted. In terms of biological role, inhibits contact coagulation pathway activation in the host by sequestering anionic polymers, such as dextran sulfate and heparin, and thus blocking interaction of protein components of the pathway with negatively charged surfaces. Inhibits dextran sulfate-mediated autoactivation of host coagulation factor XII (F12). Inhibits dextran sulfate-mediated activation of host factor XI (F11) by activated F12. Inhibits polyphosphate-induced plasma extravasation at the injection site in mouse model, probably via inhibition of bradykinin generation in host skin. This Phlebotomus duboscqi (Sandfly) protein is Salivary protein 15b.